A 466-amino-acid polypeptide reads, in one-letter code: ATP synthase subunit beta (466 aa).

156–163 (GGAGVGKT) serves as a coordination point for ATP.

This sequence belongs to the ATPase alpha/beta chains family. As to quaternary structure, F-type ATPases have 2 components, CF(1) - the catalytic core - and CF(0) - the membrane proton channel. CF(1) has five subunits: alpha(3), beta(3), gamma(1), delta(1), epsilon(1). CF(0) has three main subunits: a(1), b(2) and c(9-12). The alpha and beta chains form an alternating ring which encloses part of the gamma chain. CF(1) is attached to CF(0) by a central stalk formed by the gamma and epsilon chains, while a peripheral stalk is formed by the delta and b chains.

The protein resides in the cell inner membrane. The enzyme catalyses ATP + H2O + 4 H(+)(in) = ADP + phosphate + 5 H(+)(out). Its function is as follows. Produces ATP from ADP in the presence of a proton gradient across the membrane. The catalytic sites are hosted primarily by the beta subunits. The sequence is that of ATP synthase subunit beta from Dechloromonas aromatica (strain RCB).